We begin with the raw amino-acid sequence, 240 residues long: Ribosomal RNA small subunit methyltransferase G (240 aa).

Residues Gly80, Phe85, 103–105 (DSS), 131–132 (AE), and Arg150 each bind S-adenosyl-L-methionine.

The protein belongs to the methyltransferase superfamily. RNA methyltransferase RsmG family.

It is found in the cytoplasm. In terms of biological role, specifically methylates the N7 position of a guanine in 16S rRNA. The chain is Ribosomal RNA small subunit methyltransferase G from Thermoanaerobacter sp. (strain X514).